The chain runs to 195 residues: Probable DNA-directed RNA polymerase subunit delta (195 aa).

The HTH HARE-type domain maps to 14 to 81; the sequence is FALVEIATAI…GNNEWALRAW (68 aa). Acidic residues-rich tracts occupy residues 120–172 and 181–195; these read DDDV…DESI and GGDD…DQEK. Positions 120–195 are disordered; it reads DDDVIDYNDD…DDLSDGDQEK (76 aa).

Belongs to the RpoE family. In terms of assembly, RNAP is composed of a core of 2 alpha, a beta and a beta' subunits. The core is associated with a delta subunit and one of several sigma factors.

Functionally, participates in both the initiation and recycling phases of transcription. In the presence of the delta subunit, RNAP displays an increased specificity of transcription, a decreased affinity for nucleic acids, and an increased efficiency of RNA synthesis because of enhanced recycling. The sequence is that of Probable DNA-directed RNA polymerase subunit delta from Leuconostoc mesenteroides subsp. mesenteroides (strain ATCC 8293 / DSM 20343 / BCRC 11652 / CCM 1803 / JCM 6124 / NCDO 523 / NBRC 100496 / NCIMB 8023 / NCTC 12954 / NRRL B-1118 / 37Y).